A 179-amino-acid polypeptide reads, in one-letter code: Large ribosomal subunit protein uL10 (179 aa).

It belongs to the universal ribosomal protein uL10 family. Part of the ribosomal stalk of the 50S ribosomal subunit. The N-terminus interacts with L11 and the large rRNA to form the base of the stalk. The C-terminus forms an elongated spine to which L12 dimers bind in a sequential fashion forming a multimeric L10(L12)X complex.

In terms of biological role, forms part of the ribosomal stalk, playing a central role in the interaction of the ribosome with GTP-bound translation factors. The sequence is that of Large ribosomal subunit protein uL10 from Mycolicibacterium gilvum (strain PYR-GCK) (Mycobacterium gilvum (strain PYR-GCK)).